Here is a 524-residue protein sequence, read N- to C-terminus: Cytochrome P450 CYP749A22 (524 aa).

Residues 12 to 32 (TPILFQFLLSSLCVFLLFVFI) traverse the membrane as a helical segment. Cysteine 472 contacts heme.

Belongs to the cytochrome P450 family. Heme serves as cofactor.

Its subcellular location is the membrane. In terms of biological role, probable heme-thiolate monooxygenase. The sequence is that of Cytochrome P450 CYP749A22 from Panax ginseng (Korean ginseng).